The chain runs to 959 residues: Glycine dehydrogenase (decarboxylating) (959 aa).

K707 bears the N6-(pyridoxal phosphate)lysine mark.

It belongs to the GcvP family. The glycine cleavage system is composed of four proteins: P, T, L and H. Pyridoxal 5'-phosphate serves as cofactor.

The catalysed reaction is N(6)-[(R)-lipoyl]-L-lysyl-[glycine-cleavage complex H protein] + glycine + H(+) = N(6)-[(R)-S(8)-aminomethyldihydrolipoyl]-L-lysyl-[glycine-cleavage complex H protein] + CO2. In terms of biological role, the glycine cleavage system catalyzes the degradation of glycine. The P protein binds the alpha-amino group of glycine through its pyridoxal phosphate cofactor; CO(2) is released and the remaining methylamine moiety is then transferred to the lipoamide cofactor of the H protein. This Photobacterium profundum (strain SS9) protein is Glycine dehydrogenase (decarboxylating).